The chain runs to 285 residues: 2-dehydro-3-deoxyphosphooctonate aldolase (285 aa).

The protein belongs to the KdsA family.

Its subcellular location is the cytoplasm. It catalyses the reaction D-arabinose 5-phosphate + phosphoenolpyruvate + H2O = 3-deoxy-alpha-D-manno-2-octulosonate-8-phosphate + phosphate. The protein operates within carbohydrate biosynthesis; 3-deoxy-D-manno-octulosonate biosynthesis; 3-deoxy-D-manno-octulosonate from D-ribulose 5-phosphate: step 2/3. Its pathway is bacterial outer membrane biogenesis; lipopolysaccharide biosynthesis. In Acidovorax sp. (strain JS42), this protein is 2-dehydro-3-deoxyphosphooctonate aldolase.